The chain runs to 335 residues: Olfactory receptor 52B6 (335 aa).

The Extracellular portion of the chain corresponds to 1-45 (MAQVRALHKIMALFSANSIGAMNNSDTRIAGCFLTGIPGLEQLHI). An N-linked (GlcNAc...) asparagine glycan is attached at Asn23. Residues 46–66 (WLSIPFCIMYITALEGNGILI) traverse the membrane as a helical segment. Topologically, residues 67–74 (CVILSQAI) are cytoplasmic. The helical transmembrane segment at 75–95 (LHEPMYIFLSMLASADVLLST) threads the bilayer. The Extracellular segment spans residues 96-119 (TTMPKALANLWLGYSLISFDGCLT). A disulfide bridge connects residues Cys117 and Cys208. A helical membrane pass occupies residues 120-139 (QMFFIHFLFIHSAVLLAMAF). Residues 140 to 158 (DRYVAICSPLRYVTILTSK) are Cytoplasmic-facing. The chain crosses the membrane as a helical span at residues 159 to 179 (VIGKIVTAALSHSFIIMFPSI). The Extracellular portion of the chain corresponds to 180-215 (FLLEHLHYCQINIIAHTFCEHMGIAHLSCSDISINV). A helical membrane pass occupies residues 216-236 (WYGLAAALLSTGLDIMLITVS). At 237–256 (YIHILQAVFRLLSQDARSKA) the chain is on the cytoplasmic side. The helical transmembrane segment at 257 to 277 (LSTCGSHICVILLFYVPALFS) threads the bilayer. The Extracellular portion of the chain corresponds to 278–293 (VFAYRFGGRSVPCYVH). The chain crosses the membrane as a helical span at residues 294–314 (ILLASLYVVIPPMLNPVIYGV). Residues 315 to 335 (RTKPILEGAKQMFSNLAKGSK) are Cytoplasmic-facing.

It belongs to the G-protein coupled receptor 1 family.

The protein localises to the cell membrane. Functionally, odorant receptor. This chain is Olfactory receptor 52B6 (OR52B6), found in Homo sapiens (Human).